The sequence spans 325 residues: uncharacterized protein (325 aa).

Residues 10-30 (IVFVSLAALVLLVSVSVFIYH) traverse the membrane as a helical segment. The AB hydrolase-1 domain maps to 94 to 166 (KIAVVDRAGY…EIKAIIAMDI (73 aa)).

Its subcellular location is the cell membrane. This is an uncharacterized protein from Bacillus subtilis (strain 168).